The sequence spans 1262 residues: Unconventional myosin-VI (1262 aa).

Residues 2–53 (EDGKPVWAPHPTDGFQMGNIVDIGPDSLTIEPLNQKGKTFLALINQVFPAEE) form the Myosin N-terminal SH3-like domain. The region spanning 57 to 771 (KDVEDNCSLM…KFAEFDQIMK (715 aa)) is the Myosin motor domain. Residue 151-158 (GESGAGKT) coordinates ATP. Ser267 carries the phosphoserine modification. The interval 273 to 317 (YLNRGCTRFFANKETDKQILQNRKSPEYVKAGSLKDPLLDDHGDF) is responsible for slow ATPase activity. Thr405 carries the phosphothreonine modification. The residue at position 604 (Ser604) is a Phosphoserine. 2 actin-binding regions span residues 651 to 673 (LNLLLDKLRSTGASFIRCIKPNL) and 665 to 672 (FIRCIKPN). Positions 782-810 (KRVNLWLVCSRWKKVQWCSLSVIKLKNKI) are required for binding calmodulin. Residues 814–834 (AEACIKMQKTIRMWLCKRRHK) form the IQ domain. The three-helix bundle stretch occupies residues 835–916 (PRIDGLVKVG…EDLLSALQKK (82 aa)). Positions 864-984 (KPEVNRQIKN…EDDEKRIQAE (121 aa)) form a coiled coil. The interval 917–984 (KQQEEEAERL…EDDEKRIQAE (68 aa)) is SAH. The segment at 933–955 (MEKERKRREEDEERRRKEEEERR) is disordered. At Ser1025 the chain carries Phosphoserine. The tract at residues 1034 to 1253 (LRRGPAVQAT…ESRQARPTYA (220 aa)) is interaction with TAX1BP1 and CALCOCO2/NDP52. Residues 1084–1086 (RRL) form an interaction with OPTN region. At Ser1123 the chain carries Phosphoserine. The segment at 1125-1253 (QQNPAAQLPA…ESRQARPTYA (129 aa)) is interaction with TOM1.

It belongs to the TRAFAC class myosin-kinesin ATPase superfamily. Myosin family. In terms of assembly, homodimer; dimerization seems to implicate the unfolding of the three-helix bundle region creating an additional calmodulin binding site, and cargo binding. Able to function as a monomer under specific conditions in vitro. Forms a complex with CFTR and DAB2 in the apical membrane of epithelial cells. Component of the DISP/DOCK7-induced septin displacement complex, at least composed of DOCK7, LRCH3 and MYO6. Binding to calmodulin through a unique insert, not found in other myosins, located in the neck region between the motor domain and the IQ domain appears to contribute to the directionality reversal. This interaction occurs only if the C-terminal lobe of calmodulin is occupied by calcium. Interaction with F-actin/ACTN1 occurs only at the apical brush border domain of the proximal tubule cells. Interacts with DAB2. In vitro, the C-terminal globular tail binds a C-terminal region of DAB2. Interacts with CFTR. Interacts with CABP5. Interacts (via residues 1128-1256) with TOM1 (via residues 392-463). Interacts (via residues 1060-1285) with OPTN. Interacts (via residues 1060-1285) with TAX1BP1 and CALCOCO2/NDP52. Interacts with TOM1L2. Interacts with CLIC5; may work together in a complex which also includes RDX and MYO6 to stabilize linkages between the plasma membrane and subjacent actin cytoskeleton at the base of stereocilia. Post-translationally, phosphorylation in the motor domain, induced by EGF, results in translocation of MYO6 from the cell surface to membrane ruffles and affects F-actin dynamics. Phosphorylated in vitro by p21-activated kinase (PAK). Within the cochlea, expressed specifically within the sensory hair cells (at protein level). Expressed in the inner and outer plexiform layer of the retina (at protein level). Widely expressed. Expressed in the brain, kidney, liver, and testis.

It is found in the golgi apparatus. The protein localises to the trans-Golgi network membrane. Its subcellular location is the nucleus. It localises to the cytoplasm. The protein resides in the perinuclear region. It is found in the membrane. The protein localises to the clathrin-coated pit. Its subcellular location is the cytoplasmic vesicle. It localises to the clathrin-coated vesicle. The protein resides in the cell projection. It is found in the filopodium. The protein localises to the ruffle membrane. Its subcellular location is the microvillus. It localises to the cytosol. In terms of biological role, myosins are actin-based motor molecules with ATPase activity. Unconventional myosins serve in intracellular movements. Myosin 6 is a reverse-direction motor protein that moves towards the minus-end of actin filaments. Has slow rate of actin-activated ADP release due to weak ATP binding. Functions in a variety of intracellular processes such as vesicular membrane trafficking and cell migration. Required for the structural integrity of the Golgi apparatus via the p53-dependent pro-survival pathway. Appears to be involved in a very early step of clathrin-mediated endocytosis in polarized epithelial cells. Together with TOM1, mediates delivery of endocytic cargo to autophagosomes thereby promoting autophagosome maturation and driving fusion with lysosomes. Links TOM1 with autophagy receptors, such as TAX1BP1; CALCOCO2/NDP52 and OPTN. May act as a regulator of F-actin dynamics. As part of the DISP complex, may regulate the association of septins with actin and thereby regulate the actin cytoskeleton. May play a role in transporting DAB2 from the plasma membrane to specific cellular targets. May play a role in the extension and network organization of neurites. Required for structural integrity of inner ear hair cells. Required for the correct localization of CLIC5 and RDX at the stereocilium base. Modulates RNA polymerase II-dependent transcription. In Mus musculus (Mouse), this protein is Unconventional myosin-VI (Myo6).